The chain runs to 710 residues: MIKGKRSFPKRQNNVRVLNSSRVEEFDISDHNQSIDSINELSAYEVLSLRKKTEDGIKSNLNEERVASSLTSRAEDNKPCRDFVKSDRNVLASDFLSKYGEETDEMNKTKKKQKKIMKKEIRKRTKRKRKSVNKRELSGSIKTWIPTHSGSSVFSSLFRNCDDSKEMXDSIVDCLSEGEEIEEIKIVNLSDSSHGSSFESDEINEDKNMVDEEENDEELIDERSTNSAVRENFVRCYGKEKDEDASDVVIDFEQKPFSTHCDSVQNGLDAIQWLIDPYDLTQFFKMVFQKKVFLVCHNNPNYYGNLFSTAKFIDILQTDYVEYGTNVNVAIYKNQQRSTLNGSGKVYPQAIQKSIKAGCSIQLTNPQSFCDNVWYYCDLLQEVFGCFVGANIYITPANTAGFAPHWDDIDAFLLQLEGRKHWKIYAPDSDDEMLPRLPSGNFTDNDVINRMLVFDDWLEQGDMLYIPRGYIHQGFADKDVHSLHLTVSVCRNVTYADLLERVIPPALSNFAEQNVNIRKSLPARYLDMTGVLECDYPLLKTGTMKLHRFLDSIFSNFCKYIKELSEPAVDMMAREFMRTALPPVLTKEEKDMTALCVAGSSLYGDKEHIFTKNTSIKLLRRHGQRLIYESEERCFIVHRMANSRVYEGRPEVLFDLDVELAEGFANLVNAYPRWCLVSDLKCNDAADNIRLAELLYSNGLLMAEFREAMK.

Positions 103 to 137 (TDEMNKTKKKQKKIMKKEIRKRTKRKRKSVNKREL) are disordered. Basic residues predominate over residues 109–132 (TKKKQKKIMKKEIRKRTKRKRKSV). In terms of domain architecture, JmjC spans 359-506 (CSIQLTNPQS…DLLERVIPPA (148 aa)). Residues His405, Asp407, and His472 each coordinate Fe cation.

Belongs to the ROX family. NO66 subfamily. Fe(2+) serves as cofactor.

The protein resides in the nucleus. It carries out the reaction N(6),N(6)-dimethyl-L-lysyl(36)-[histone H3] + 2 2-oxoglutarate + 2 O2 = L-lysyl(36)-[histone H3] + 2 formaldehyde + 2 succinate + 2 CO2. Oxygenase that can act as both a histone lysine demethylase and a ribosomal histidine hydroxylase. Specifically demethylates 'Lys-4' (H3K4me) and 'Lys-36' (H3K36me) of histone H3, thereby playing a central role in histone code. The polypeptide is Bifunctional lysine-specific demethylase and histidyl-hydroxylase NO66 (Brugia malayi (Filarial nematode worm)).